The following is a 459-amino-acid chain: Glycosyl hydrolase family 109 protein (459 aa).

Positions 1 to 31 form a signal peptide, tat-type signal; the sequence is MHNIHRRNFLKAAGAATAGLVTANIALSAYA. NAD(+) contacts are provided by residues 64-65, Asp-86, 135-138, 155-156, and Asn-184; these read ER, WEWH, and EV. Substrate is bound by residues Tyr-213, Arg-232, 244 to 247, and Tyr-326; that span reads YPTH. Residue Tyr-244 participates in NAD(+) binding.

It belongs to the Gfo/Idh/MocA family. Glycosyl hydrolase 109 subfamily. Requires NAD(+) as cofactor. Post-translationally, predicted to be exported by the Tat system. The position of the signal peptide cleavage has not been experimentally proven.

Its function is as follows. Glycosidase. This is Glycosyl hydrolase family 109 protein from Shewanella baltica (strain OS185).